Here is a 273-residue protein sequence, read N- to C-terminus: Orotidine 5'-phosphate decarboxylase (273 aa).

Catalysis depends on Lys-95, which acts as the Proton donor.

Belongs to the OMP decarboxylase family. Type 2 subfamily.

The enzyme catalyses orotidine 5'-phosphate + H(+) = UMP + CO2. It functions in the pathway pyrimidine metabolism; UMP biosynthesis via de novo pathway; UMP from orotate: step 2/2. The chain is Orotidine 5'-phosphate decarboxylase from Bordetella bronchiseptica (strain ATCC BAA-588 / NCTC 13252 / RB50) (Alcaligenes bronchisepticus).